Reading from the N-terminus, the 1854-residue chain is Dystrophin, isoform D (1854 aa).

8 disordered regions span residues 1–65 (MTTT…PIYA), 84–161 (GSTT…YEMP), 240–352 (QSPT…MSPA), 516–548 (LKPT…PTPS), 595–650 (TPGG…TSES), 716–740 (VMSK…PSTA), 783–830 (LKLQ…STTP), and 1012–1036 (VSDT…EQSR). Low complexity-rich tracts occupy residues 11 to 37 (QRQQ…QQHQ) and 84 to 96 (GSTT…LQSS). The segment covering 143–157 (GLSSAQPATSASSGN) has biased composition (polar residues). The span at 276–296 (QQQQQQQQAGINGQINGNGNQ) shows a compositional bias: low complexity. Polar residues-rich tracts occupy residues 331–345 (TLSR…SSAD) and 518–536 (PTST…SNTA). Residues 595–606 (TPGGGVVGGQAA) are compositionally biased toward gly residues. Residues 716-727 (VMSKSNSSLGSV) are compositionally biased toward polar residues. 2 stretches are compositionally biased toward low complexity: residues 728–740 (TTPS…PSTA) and 783–814 (LKLQ…QQIQ). The segment covering 815 to 830 (NGFASDDNSSSCSTTP) has biased composition (polar residues). Spectrin repeat units follow at residues 936 to 1069 (EHWN…RLDE) and 1072 to 1176 (TKMR…VLCQ). Positions 1179–1209 (AQQTHENGDDGRTTSNSGTIGPLPNLGQSVK) are disordered. A WW domain is found at 1206–1239 (QSVKPPWERATTAANVPYYIDHERETTHWDHPEM). Residues 1464-1520 (KHQAKCNICKEYPIVGFRYRCLKCFNFDMCQKCFFFGRNAKNHKLTHPMHEYCTTTT) form a ZZ-type zinc finger. Positions 1469, 1472, 1484, 1487, 1493, 1496, 1506, and 1510 each coordinate Zn(2+). Residue S1564 is modified to Phosphoserine. Disordered regions lie at residues 1673-1701 (EQSG…GEQG) and 1744-1854 (DEPN…ELQK). Polar residues-rich tracts occupy residues 1682–1694 (NGMQ…MTGL) and 1765–1796 (ALNS…QQNG). Residues 1815-1826 (QELESINDDLED) show a composition bias toward acidic residues. A compositionally biased stretch (low complexity) spans 1827-1845 (SSSSNTTNTTTTTTTTATT).

Component of the dystrophin associated protein complex (DAPC). Interacts with Dg, via the Dg WW domain binding sites. In terms of tissue distribution, during embryogenesis and in third instar larvae, expression is seen in pericardial cells of the dorsal vessel and in the ventral nerve cord. Expression is absent from both the embryonic and larval musculature.

It localises to the cell membrane. It is found in the sarcolemma. The protein resides in the cytoplasm. The protein localises to the cytoskeleton. In terms of biological role, required for the maintenance of appropriate synaptic retrograde communication and the stabilization of muscle cell architecture or physiology. May play a role in anchoring the cytoskeleton to the plasma membrane. The polypeptide is Dystrophin, isoform D (Dys) (Drosophila melanogaster (Fruit fly)).